Reading from the N-terminus, the 540-residue chain is Signal peptide peptidase-like 3 (540 aa).

The N-terminal stretch at 1–28 (MSSFDPPNHRYSALVLILLLLGFSVAAA) is a signal peptide. The Lumenal segment spans residues 29–194 (DDVSWTEDSS…LYAPKRPAVD (166 aa)). Positions 98-172 (SHLSSRLDGH…ISKSSGDALN (75 aa)) constitute a PA domain. N155 and N172 each carry an N-linked (GlcNAc...) asparagine glycan. Residues 195-215 (LTAGLLLLMAVGTVVVASLWS) form a helical membrane-spanning segment. Residues 216 to 250 (ELTDPDQANESYSILAKDVSSAGTRKDDPEKEILD) are Cytoplasmic-facing. A helical membrane pass occupies residues 251-273 (ISVTGAVFFIVTASIFLLLLFYF). The Lumenal segment spans residues 274–276 (MSS). A helical transmembrane segment spans residues 277–299 (WFVWVLTIFFCIGGMQGMHNIIM). The Cytoplasmic segment spans residues 300-321 (AVILRKCRHLARKSVKLPLLGT). The helical transmembrane segment at 322-342 (MSVLSLLVNIVCLAFAVFWFI) threads the bilayer. Over 343 to 347 (KRHTS) the chain is Lumenal. Residues 348-368 (YSWVGQDILGICLMITALQVV) traverse the membrane as a helical segment. Residues 369-377 (RLPNIKVAT) lie on the Cytoplasmic side of the membrane. Residues 378–398 (VLLCCAFVYDIFWVFISPLIF) traverse the membrane as a helical segment. Residue D387 is part of the active site. Residues 399 to 429 (HESVMIVVAQGDSSTGESIPMLLRIPRFFDP) are Lumenal-facing. The chain crosses the membrane as a helical span at residues 430–450 (WGGYDMIGFGDILFPGLLISF). D440 is an active-site residue. The Cytoplasmic portion of the chain corresponds to 451 to 466 (ASRYDKIKKRVISNGY). A helical transmembrane segment spans residues 467–487 (FLWLTIGYGIGLLLTYLGLYL). Topologically, residues 488–492 (MDGHG) are lumenal. Residues 493–513 (QPALLYIVPCTLGLAVILGLV) form a helical membrane-spanning segment. The short motif at 494–496 (PAL) is the PAL element. Topologically, residues 514–540 (RGELKELWNYGIEESESHTPEDPMPVA) are cytoplasmic.

The protein belongs to the peptidase A22B family. Glycosylated. In terms of tissue distribution, ubiquitous.

It localises to the endosome membrane. In terms of biological role, intramembrane-cleaving aspartic protease (I-CLiP) that cleaves type II membrane signal peptides in the hydrophobic plane of the membrane. The polypeptide is Signal peptide peptidase-like 3 (SPPL3) (Arabidopsis thaliana (Mouse-ear cress)).